The chain runs to 431 residues: Beta-lactamase hydrolase-like protein (431 aa).

Zn(2+) contacts are provided by histidine 212, histidine 214, and histidine 286. Residue aspartate 309 participates in substrate binding.

Belongs to the metallo-beta-lactamase superfamily. It depends on Zn(2+) as a cofactor.

In terms of biological role, could play a role in cell adherence or biofilm development. This chain is Beta-lactamase hydrolase-like protein, found in Xylella fastidiosa (strain 9a5c).